The primary structure comprises 469 residues: Adenosylhomocysteinase (469 aa).

3 residues coordinate substrate: Thr63, Asp139, and Glu164. 165–167 (TTT) contributes to the NAD(+) binding site. Positions 194 and 198 each coordinate substrate. NAD(+) contacts are provided by residues Asn199, 228 to 233 (GYGDVG), Glu251, Asn300, 321 to 323 (IGH), and Asn375.

It belongs to the adenosylhomocysteinase family. Requires NAD(+) as cofactor.

It is found in the cytoplasm. The enzyme catalyses S-adenosyl-L-homocysteine + H2O = L-homocysteine + adenosine. The protein operates within amino-acid biosynthesis; L-homocysteine biosynthesis; L-homocysteine from S-adenosyl-L-homocysteine: step 1/1. May play a key role in the regulation of the intracellular concentration of adenosylhomocysteine. The sequence is that of Adenosylhomocysteinase from Pseudomonas entomophila (strain L48).